A 52-amino-acid polypeptide reads, in one-letter code: UPF0391 membrane protein ACIAD3602 (52 aa).

2 helical membrane-spanning segments follow: residues 6 to 26 and 30 to 50; these read IIFA…VAGL and FAVI…ISRG.

The protein belongs to the UPF0391 family.

The protein localises to the cell membrane. This Acinetobacter baylyi (strain ATCC 33305 / BD413 / ADP1) protein is UPF0391 membrane protein ACIAD3602.